The following is a 1044-amino-acid chain: Unconventional myosin-Ic (1044 aa).

Residues 28–712 (GVQDFVLLEN…TLFATEDSLE (685 aa)) enclose the Myosin motor domain. ATP is bound by residues Asn69, Tyr77, 120 to 129 (SGESGAGKTE), and 173 to 177 (NDNSS). Position 364 is an N6-methyllysine (Lys364). Ser389 bears the Phosphoserine mark. The residue at position 467 (Lys467) is an N6-acetyllysine. Ser517 is subject to Phosphoserine. The segment at 589–611 (LLQLVEILRSKEPAYIRCIKPND) is actin-binding. IQ domains are found at residues 715–744 (RQSLATKIQAAWRGFHWRQKFLRVKRSAIC) and 738–767 (VKRSAICIQSWWRGTLGRRKAAKRKWAAQT). 2 positions are modified to phosphoserine: Ser845 and Ser1022. Residues 866 to 1040 (KDNYPQSVPR…NGHLAVVAPR (175 aa)) form the TH1 domain.

This sequence belongs to the TRAFAC class myosin-kinesin ATPase superfamily. Myosin family. In terms of assembly, interacts (via its IQ motifs) with CABP1 and CIB1; the interaction with CABP1 and CIB1 is calcium-dependent. Interacts (via tail domain) with PLEKHB1 (via PH domain); the interaction is not affected by the presence or absence of calcium and CALM. Interacts with POLR1A. Interacts with POLR2A. Component of the B-WICH complex, at least composed of SMARCA5/SNF2H, BAZ1B/WSTF, SF3B1, DEK, MYO1C, ERCC6, MYBBP1A and DDX21. Interacts (via its IQ motifs) with CALM; this precludes interaction with YWHAB. Interacts with YWHAB; this precludes interaction with CALM. Interacts with RPS6. Interacts with actin. Interacts with LLPH. Interacts with GLUT4. Interacts (via its IQ motifs) with SH3BGRL3; the interaction is dependent on calcium and takes place at membrane ruffles.

It localises to the cytoplasm. The protein resides in the nucleus. Its subcellular location is the cell cortex. It is found in the cell projection. The protein localises to the stereocilium membrane. It localises to the cytoplasmic vesicle. The protein resides in the ruffle membrane. Myosins are actin-based motor molecules with ATPase activity. Unconventional myosins serve in intracellular movements. Their highly divergent tails are presumed to bind to membranous compartments, which would be moved relative to actin filaments. Involved in glucose transporter recycling in response to insulin by regulating movement of intracellular GLUT4-containing vesicles to the plasma membrane. Component of the hair cell's (the sensory cells of the inner ear) adaptation-motor complex. Acts as a mediator of adaptation of mechanoelectrical transduction in stereocilia of vestibular hair cells. Binds phosphoinositides and links the actin cytoskeleton to cellular membranes. The sequence is that of Unconventional myosin-Ic (Myo1c) from Rattus norvegicus (Rat).